We begin with the raw amino-acid sequence, 845 residues long: uncharacterized protein (845 aa).

Polar residues predominate over residues 224 to 241 (SNNIPTGIQDSSKYTVNG). 7 disordered regions span residues 224 to 244 (SNNI…GPTE), 324 to 346 (QGTE…ANNG), 383 to 434 (RTAN…EGSA), 456 to 485 (VKAS…ATLN), 519 to 619 (NMTL…PKNS), 674 to 701 (VVSR…DSSP), and 739 to 785 (RKST…ANKS). A compositionally biased stretch (basic and acidic residues) spans 390-399 (PTKKSNRSEQ). Polar residues predominate over residues 400-422 (SKTVANTNVGSKNGTTPRSFAQK). The segment covering 534 to 546 (NSWRSKYLSEGKN) has biased composition (basic and acidic residues). The segment covering 563 to 576 (SSLASPTKSSASPL) has biased composition (low complexity). Phosphoserine is present on S567. 2 stretches are compositionally biased toward basic and acidic residues: residues 579-588 (APKETPERLC) and 600-614 (ANLK…KSDI). 3 stretches are compositionally biased toward polar residues: residues 674–683 (VVSRTVTSPK), 691–701 (SKASYNQDSSP), and 743–760 (ADSL…TPKA).

The protein resides in the mitochondrion. This is an uncharacterized protein from Schizosaccharomyces pombe (strain 972 / ATCC 24843) (Fission yeast).